We begin with the raw amino-acid sequence, 180 residues long: Large ribosomal subunit protein uL6 (180 aa).

This sequence belongs to the universal ribosomal protein uL6 family. In terms of assembly, part of the 50S ribosomal subunit.

In terms of biological role, this protein binds to the 23S rRNA, and is important in its secondary structure. It is located near the subunit interface in the base of the L7/L12 stalk, and near the tRNA binding site of the peptidyltransferase center. The polypeptide is Large ribosomal subunit protein uL6 (Borrelia garinii subsp. bavariensis (strain ATCC BAA-2496 / DSM 23469 / PBi) (Borreliella bavariensis)).